Here is a 155-residue protein sequence, read N- to C-terminus: Deoxyuridine 5'-triphosphate nucleotidohydrolase (155 aa).

Substrate is bound by residues Arg-74–Gly-76, Asn-87, and Leu-91–Asp-93.

It belongs to the dUTPase family. Mg(2+) serves as cofactor.

It carries out the reaction dUTP + H2O = dUMP + diphosphate + H(+). Its pathway is pyrimidine metabolism; dUMP biosynthesis; dUMP from dCTP (dUTP route): step 2/2. This enzyme is involved in nucleotide metabolism: it produces dUMP, the immediate precursor of thymidine nucleotides and it decreases the intracellular concentration of dUTP so that uracil cannot be incorporated into DNA. In Xylella fastidiosa (strain M23), this protein is Deoxyuridine 5'-triphosphate nucleotidohydrolase.